The sequence spans 364 residues: Putative methylthioribose-1-phosphate isomerase (364 aa).

Residues 57–59, arginine 100, and glutamine 206 contribute to the substrate site; that span reads RGA. Aspartate 247 acts as the Proton donor in catalysis. 257–258 serves as a coordination point for substrate; sequence NK.

Belongs to the eIF-2B alpha/beta/delta subunits family. MtnA subfamily.

The catalysed reaction is 5-(methylsulfanyl)-alpha-D-ribose 1-phosphate = 5-(methylsulfanyl)-D-ribulose 1-phosphate. In terms of biological role, catalyzes the interconversion of methylthioribose-1-phosphate (MTR-1-P) into methylthioribulose-1-phosphate (MTRu-1-P). The chain is Putative methylthioribose-1-phosphate isomerase from Pyrococcus horikoshii (strain ATCC 700860 / DSM 12428 / JCM 9974 / NBRC 100139 / OT-3).